The chain runs to 1378 residues: DNA-directed RNA polymerase subunit beta (1378 aa).

It belongs to the RNA polymerase beta chain family. As to quaternary structure, the RNAP catalytic core consists of 2 alpha, 1 beta, 1 beta' and 1 omega subunit. When a sigma factor is associated with the core the holoenzyme is formed, which can initiate transcription.

It carries out the reaction RNA(n) + a ribonucleoside 5'-triphosphate = RNA(n+1) + diphosphate. In terms of biological role, DNA-dependent RNA polymerase catalyzes the transcription of DNA into RNA using the four ribonucleoside triphosphates as substrates. In Campylobacter jejuni subsp. jejuni serotype O:23/36 (strain 81-176), this protein is DNA-directed RNA polymerase subunit beta.